The sequence spans 329 residues: Nuclear pore complex protein NUP35 (329 aa).

Disordered stretches follow at residues 48-105 (NFGG…GKGK) and 123-167 (VSGS…PPRE). Positions 123 to 139 (VSGSPSWWSQSKAGSST) are enriched in polar residues. Residues 183–264 (LDEEEWVTVY…KPVDPIQKQA (82 aa)) form the RRM Nup35-type domain. The interval 271–315 (NQGFMPLPPPSSTRNTARPLSRPQYLQNGSAFSPQPSGGAMASPS) is disordered. The segment covering 282 to 306 (STRNTARPLSRPQYLQNGSAFSPQP) has biased composition (polar residues).

Belongs to the Nup35 family. In terms of assembly, part of the nuclear pore complex (NPC). The NPC has an eight-fold symmetrical structure comprising a central transport channel and two rings, the cytoplasmic and nuclear rings, to which eight filaments are attached. The cytoplasmic filaments have loose ends, while the nuclear filaments are joined in a distal ring, forming a nuclear basket. NPCs are highly dynamic in configuration and composition, and can be devided in 3 subcomplexes, the NUP62 subcomplex, the NUP107-160 subcomplex and the NUP93 subcomplex, containing approximately 30 different nucleoporin proteins.

It is found in the nucleus. The protein localises to the nuclear pore complex. This Arabidopsis thaliana (Mouse-ear cress) protein is Nuclear pore complex protein NUP35.